Consider the following 65-residue polypeptide: Photosystem II reaction center protein J (65 aa).

Residues Leu35 to Tyr55 form a helical membrane-spanning segment.

Belongs to the PsbJ family. In terms of assembly, PSII is composed of 1 copy each of membrane proteins PsbA, PsbB, PsbC, PsbD, PsbE, PsbF, PsbH, PsbI, PsbJ, PsbK, PsbL, PsbM, PsbT, PsbX, PsbY, Psb30/Ycf12, peripheral proteins PsbO, CyanoQ (PsbQ), PsbU, PsbV and a large number of cofactors. It forms dimeric complexes.

The protein localises to the cellular thylakoid membrane. Functionally, one of the components of the core complex of photosystem II (PSII). PSII is a light-driven water:plastoquinone oxidoreductase that uses light energy to abstract electrons from H(2)O, generating O(2) and a proton gradient subsequently used for ATP formation. It consists of a core antenna complex that captures photons, and an electron transfer chain that converts photonic excitation into a charge separation. The sequence is that of Photosystem II reaction center protein J from Prochlorococcus marinus (strain NATL1A).